We begin with the raw amino-acid sequence, 245 residues long: NADH-quinone oxidoreductase subunit C (245 aa).

Residues 1–10 (MNAPQDRTDD) are compositionally biased toward basic and acidic residues. 2 disordered regions span residues 1 to 54 (MNAP…GYGG) and 217 to 245 (QRKDYPLGGVPVEYKGAEIPPPDRRRSYQ). Residues 11-28 (GGVPVPVTPAGATGGAPA) show a composition bias toward low complexity. A compositionally biased stretch (gly residues) spans 39-54 (GMFGDQGTGDVSGYGG).

It belongs to the complex I 30 kDa subunit family. In terms of assembly, NDH-1 is composed of 14 different subunits. Subunits NuoB, C, D, E, F, and G constitute the peripheral sector of the complex.

It is found in the cell membrane. It catalyses the reaction a quinone + NADH + 5 H(+)(in) = a quinol + NAD(+) + 4 H(+)(out). In terms of biological role, NDH-1 shuttles electrons from NADH, via FMN and iron-sulfur (Fe-S) centers, to quinones in the respiratory chain. The immediate electron acceptor for the enzyme in this species is believed to be a menaquinone. Couples the redox reaction to proton translocation (for every two electrons transferred, four hydrogen ions are translocated across the cytoplasmic membrane), and thus conserves the redox energy in a proton gradient. The sequence is that of NADH-quinone oxidoreductase subunit C from Salinispora arenicola (strain CNS-205).